Here is a 276-residue protein sequence, read N- to C-terminus: MKKWFAVIGDPIEHSKSPAMHNAWFEEMSVEATYIPLHVSSEQLGAAVAGLKTLGASGWNVTIPHKTAIIPYLDELDELAQKMGAVNTVVRTTEGKLIGYNTDGVGFVRSLEEAVGSSHKDKPVLLVGAGGAARGIAFAMQQQGYSDLTMTNRTVANAQAIVDEMGIGRAISLKEAEETLAHFSIIVQMTSAGLATGNFSMPFSLNRLAKGAIVADIVYNPLMTPFLQAAEEKGATIVTGLGMFVHQGAIAFEHWLGDYPNTNSMIVQLNAQLGGN.

Shikimate-binding positions include 15–17 (SKS) and Thr-62. Lys-66 serves as the catalytic Proton acceptor. Glu-78 is an NADP(+) binding site. Positions 87 and 103 each coordinate shikimate. NADP(+)-binding positions include 128 to 132 (GAGGA) and Ile-217. Tyr-219 is a shikimate binding site. NADP(+) is bound at residue Gly-240.

The protein belongs to the shikimate dehydrogenase family. Homodimer.

It catalyses the reaction shikimate + NADP(+) = 3-dehydroshikimate + NADPH + H(+). It functions in the pathway metabolic intermediate biosynthesis; chorismate biosynthesis; chorismate from D-erythrose 4-phosphate and phosphoenolpyruvate: step 4/7. Involved in the biosynthesis of the chorismate, which leads to the biosynthesis of aromatic amino acids. Catalyzes the reversible NADPH linked reduction of 3-dehydroshikimate (DHSA) to yield shikimate (SA). The polypeptide is Shikimate dehydrogenase (NADP(+)) (Lysinibacillus sphaericus (strain C3-41)).